A 1235-amino-acid chain; its full sequence is High-affinity potassium transport protein (1235 aa).

Ser15 carries the phosphoserine modification. 2 consecutive transmembrane segments (helical) span residues 49–70 (SFIA…ILLY) and 78–98 (IDTL…TVDI). Asn100 carries N-linked (GlcNAc...) asparagine glycosylation. The helical transmembrane segment at 107–127 (IVLYIVCCISTPIAVHSCLAF) threads the bilayer. 4 disordered regions span residues 161 to 310 (LTAR…SPAD), 323 to 344 (EATA…GTRY), 361 to 441 (KIKI…TKPP), and 488 to 565 (RLST…HQLQ). Positions 164-179 (RTMTKNRTGTQRTSYP) are enriched in polar residues. Asn169 is a glycosylation site (N-linked (GlcNAc...) asparagine). Residues 198–217 (VNRDEQDSVHSDQNSHDISR) show a composition bias toward basic and acidic residues. A compositionally biased stretch (low complexity) spans 219–232 (SSNNNTNHNGSSGS). N-linked (GlcNAc...) asparagine glycans are attached at residues Asn222 and Asn227. The span at 237–247 (VKEDETDDNGE) shows a compositional bias: acidic residues. Over residues 248-274 (YQENNSYSTVGSSSNTVADESLNQKPK) the composition is skewed to polar residues. Asn251 carries an N-linked (GlcNAc...) asparagine glycan. N-linked (GlcNAc...) asparagine glycans are attached at residues Asn369 and Asn383. Composition is skewed to polar residues over residues 370–415 (ESNT…SNSG) and 490–502 (STGS…SNNV). Ser414 carries the post-translational modification Phosphoserine. 3 N-linked (GlcNAc...) asparagine glycosylation sites follow: Asn497, Asn501, and Asn532. The span at 510-539 (DMDDDDDDDDNDGDNNEEYFADNESGDEDE) shows a compositional bias: acidic residues. Ser534 carries the post-translational modification Phosphoserine. Basic and acidic residues predominate over residues 540–563 (RVQQSEPHSDSELKSHQQQQEKHQ). 2 N-linked (GlcNAc...) asparagine glycosylation sites follow: Asn580 and Asn677. The segment at 671-706 (HDGSHKNGSEEASSDSNENIYSTNGGSDHNGLNNYP) is disordered. Over residues 680–706 (EEASSDSNENIYSTNGGSDHNGLNNYP) the composition is skewed to polar residues. A run of 5 helical transmembrane segments spans residues 778 to 800 (ILVV…WIIL), 813 to 834 (VSPT…GLTL), 838 to 858 (SMMS…FIII), 862 to 882 (GFPI…PDLS), and 898 to 918 (CFTL…LAGL). Asn919 carries an N-linked (GlcNAc...) asparagine glycan. 2 helical membrane-spanning segments follow: residues 923–943 (WILF…SKGY) and 971–991 (SIQV…AISI). Residues 1003 to 1063 (GLYGDMGGEP…KKKKKTENPN (61 aa)) form a disordered region. Over residues 1010–1031 (GEPEDTDTEDDGNDEDDDEENE) the composition is skewed to acidic residues. N-linked (GlcNAc...) asparagine glycosylation occurs at Asn1030. Residues 1036-1049 (QSSQRSSSNNNNNN) show a composition bias toward low complexity. The next 2 helical transmembrane spans lie at 1078 to 1098 (QLSF…ICEG) and 1111 to 1131 (IFAI…SLGY). A glycan (N-linked (GlcNAc...) asparagine) is linked at Asn1135.

This sequence belongs to the TrkH potassium transport family.

It localises to the membrane. Functionally, this protein is required for high-affinity potassium transport. In Saccharomyces cerevisiae (strain ATCC 204508 / S288c) (Baker's yeast), this protein is High-affinity potassium transport protein (TRK1).